Reading from the N-terminus, the 240-residue chain is Ribonuclease 3 (240 aa).

An RNase III domain is found at 4 to 134 (SRQPLLDALG…LLGAIYLQHG (131 aa)). Glu44 serves as a coordination point for Mg(2+). Asp48 is an active-site residue. Positions 120 and 123 each coordinate Mg(2+). Glu123 is a catalytic residue. The region spanning 161 to 229 (DWKTSLQELT…AAAAWKALEV (69 aa)) is the DRBM domain.

Belongs to the ribonuclease III family. As to quaternary structure, homodimer. Mg(2+) serves as cofactor.

The protein localises to the cytoplasm. It carries out the reaction Endonucleolytic cleavage to 5'-phosphomonoester.. In terms of biological role, digests double-stranded RNA. Involved in the processing of primary rRNA transcript to yield the immediate precursors to the large and small rRNAs (23S and 16S). Processes some mRNAs, and tRNAs when they are encoded in the rRNA operon. Processes pre-crRNA and tracrRNA of type II CRISPR loci if present in the organism. The protein is Ribonuclease 3 of Mycobacterium bovis (strain ATCC BAA-935 / AF2122/97).